We begin with the raw amino-acid sequence, 236 residues long: Serine/arginine-rich SC35-like splicing factor SCL28 (236 aa).

Disordered regions lie at residues 1 to 53 (MARA…LIRN) and 124 to 219 (EENR…RVLT). A compositionally biased stretch (basic and acidic residues) spans 14 to 43 (RPRDRSPPRERKGYDDNRLRERPSSRDHES). Positions 47 to 125 (SGLLIRNLPL…REIAIVFAEE (79 aa)) constitute an RRM domain. Residues 149–176 (TSHRSPRRRYRSHSRSRSPPRRESRHSK) show a composition bias toward basic residues. S184 is subject to Phosphoserine. Residues 199–217 (RNEREYKSRNCRSPREERV) show a composition bias toward basic and acidic residues.

Belongs to the splicing factor SR family. SCL subfamily. Component of the spliceosome. Interacts with RS2Z33, CYP59, CYP63 and CYP95.

The protein resides in the nucleus speckle. Functionally, involved in intron recognition and spliceosome assembly. Probably active at the 5' splice sites. The polypeptide is Serine/arginine-rich SC35-like splicing factor SCL28 (SCL28) (Arabidopsis thaliana (Mouse-ear cress)).